Here is a 677-residue protein sequence, read N- to C-terminus: DNA ligase (677 aa).

NAD(+)-binding positions include D36–D40, S85–I86, and E122. K124 functions as the N6-AMP-lysine intermediate in the catalytic mechanism. NAD(+)-binding residues include R145, E181, K298, and K322. Residues C416, C419, C434, and C440 each coordinate Zn(2+). The region spanning L600–D677 is the BRCT domain.

It belongs to the NAD-dependent DNA ligase family. LigA subfamily. The cofactor is Mg(2+). It depends on Mn(2+) as a cofactor.

The enzyme catalyses NAD(+) + (deoxyribonucleotide)n-3'-hydroxyl + 5'-phospho-(deoxyribonucleotide)m = (deoxyribonucleotide)n+m + AMP + beta-nicotinamide D-nucleotide.. Its function is as follows. DNA ligase that catalyzes the formation of phosphodiester linkages between 5'-phosphoryl and 3'-hydroxyl groups in double-stranded DNA using NAD as a coenzyme and as the energy source for the reaction. It is essential for DNA replication and repair of damaged DNA. The polypeptide is DNA ligase (Methylibium petroleiphilum (strain ATCC BAA-1232 / LMG 22953 / PM1)).